Consider the following 743-residue polypeptide: Homeobox-leucine zipper protein PROTODERMAL FACTOR 2 (743 aa).

The tract at residues 1 to 72 is disordered; it reads MYHPNMFESH…KKRYHRHTQR (72 aa). Over residues 30–39 the composition is skewed to basic and acidic residues; the sequence is SREDDFETKS. Residues 60-71 show a composition bias toward basic residues; that stretch reads PNKKKRYHRHTQ. A DNA-binding region (homeobox) is located at residues 62-121; that stretch reads KKKRYHRHTQRQIQELESFFKECPHPDDKQRKELSRDLNLEPLQVKFWFQNKRTQMKAQS. A coiled-coil region spans residues 110 to 192; it reads FQNKRTQMKA…DRISAIAAKY (83 aa). One can recognise an START domain in the interval 244 to 476; it reads SETDKPIIVE…LERQCERLAS (233 aa).

The protein belongs to the HD-ZIP homeobox family. Class IV subfamily. Interacts with GAI/RGA2, RGA/RGA1/GRS, RGL2/SCL19 and ATML1. Binds to AIL7/PLT7, ANT, BBM and AIL1. In terms of tissue distribution, specifically expressed in the layer 1 (L1) of shoot meristems.

The protein localises to the nucleus. In terms of biological role, probable transcription factor that binds to the L1 box DNA sequence 5'-TAAATG[CT]A-3'. Plays a role in maintaining the identity of L1 cells, possibly by interacting with their L1 box or other target-gene promoters; binds to the LIP1 gene promoter and stimulates its expression upon imbibition. Acts as a positive regulator of gibberellins (GAs)-regulated epidermal gene expression (e.g. LIP1, LIP2, LTP1, FDH and PDF1). Functionally redundant to ATML1. Involved, together with HDG proteins (e.g. HDG1, HDG2, HDG5 and HDG12), in the regulation of flower organs development by promoting the expression of APETALA 3 (AP3) in the epidermis and internal cell layers of developing flowers. Seems to promote cell differentiation. This Arabidopsis thaliana (Mouse-ear cress) protein is Homeobox-leucine zipper protein PROTODERMAL FACTOR 2.